A 1036-amino-acid chain; its full sequence is Non-canonical non-ribosomal peptide synthetase FUB8 (1036 aa).

The segment at 21-343 (EIARDEPDRV…LASVVTHPDE (323 aa)) is adenylation (A) domain. A Carrier domain is found at 544 to 621 (TTEDVVRSGI…QLAHTVWSHL (78 aa)). At S579 the chain carries O-(pantetheine 4'-phosphoryl)serine. A thioester reductase (TR) domain region spans residues 658-899 (LTGTTGEIGS…IPIDLLTEVI (242 aa)).

Its pathway is mycotoxin biosynthesis. Functionally, non-canonical non-ribosomal peptide synthetase; part of the gene cluster that mediates the biosynthesis of fusaric acid, a mycotoxin with low to moderate toxicity to animals and humans, but with high phytotoxic properties. L-aspartate is suggested as fusaric acid amino acid precursor that is activated and further processed to O-acetyl-L-homoserine by cluster enzymes aspartate kinase FUB3 and homoserine O-acetyltransferase FUB5, as well as enzymes of the primary metabolism. The polyketide synthase (PKS) FUB1 generates the triketide trans-2-hexenal which is presumptively released by the hydrolase FUB4 and linked to the NRPS-bound amino acid precursor by NAD(P)-dependent dehydrogenase FUB6. FUB1, FUB4, and the non-canonical NRPS Fub8 may form an enzyme complex. Further processing of the NRPS-bound intermediate might be carried out by FUB6 and the sulfhydrylase FUB7, enabling a spontaneous electrocyclization to close the carbon backbone of fusaric acid. Dihydrofusaric acid is likely to be released via reduction by the thioester reductase (TR) domain of FUB8 whereupon the final oxidation to fusaric acid may (also) be performed by the FMN-dependent dehydrogenase FUB9. The chain is Non-canonical non-ribosomal peptide synthetase FUB8 from Fusarium oxysporum f. sp. lycopersici (strain 4287 / CBS 123668 / FGSC 9935 / NRRL 34936) (Fusarium vascular wilt of tomato).